We begin with the raw amino-acid sequence, 299 residues long: GTP cyclohydrolase FolE2 (299 aa).

Residues 1–25 are disordered; that stretch reads MKTKQWPSKTERHKRFGSVPPVAGK.

This sequence belongs to the GTP cyclohydrolase IV family.

The catalysed reaction is GTP + H2O = 7,8-dihydroneopterin 3'-triphosphate + formate + H(+). The protein operates within cofactor biosynthesis; 7,8-dihydroneopterin triphosphate biosynthesis; 7,8-dihydroneopterin triphosphate from GTP: step 1/1. Converts GTP to 7,8-dihydroneopterin triphosphate. This chain is GTP cyclohydrolase FolE2, found in Halalkalibacterium halodurans (strain ATCC BAA-125 / DSM 18197 / FERM 7344 / JCM 9153 / C-125) (Bacillus halodurans).